Reading from the N-terminus, the 692-residue chain is A-kinase anchor protein 8 (692 aa).

The interval 1 to 195 (MDQGYGGYGA…FMRGRGQGRF (195 aa)) is interaction with MCM2. An interaction with DPY30 region spans residues 1–210 (MDQGYGGYGA…PGTFMRSDPF (210 aa)). Residue Arg109 is modified to Asymmetric dimethylarginine; alternate. Arg109 bears the Omega-N-methylarginine; alternate mark. The tract at residues 109 to 201 (RGGSGGGGEG…QGRFQDRSNP (93 aa)) is interaction with DDX5. Ser112 carries the phosphoserine modification. Disordered regions lie at residues 168 to 203 (GQYS…NPGT), 231 to 254 (GGRG…SMAP), and 269 to 382 (STMP…RTRD). A compositionally biased stretch (basic and acidic residues) spans 172 to 182 (ECRDPARERGS). Ser199 is modified (phosphoserine). Omega-N-methylarginine is present on residues Arg233 and Arg277. Basic and acidic residues-rich tracts occupy residues 281–297 (RMRD…DRFG) and 314–323 (PDTKLARVDS). Residues 289 to 306 (KRRGFDRFGPDGTGRKRK) carry the Bipartite nuclear localization signal motif. A Glycyl lysine isopeptide (Lys-Gly) (interchain with G-Cter in SUMO2) cross-link involves residue Lys317. Phosphoserine occurs at positions 323, 328, and 339. Positions 324–334 (EGDFSENDDAA) are enriched in acidic residues. The interval 387–450 (RIQFACSVCK…NKKIEKRRQE (64 aa)) is involved in chromatin-binding. C2H2 AKAP95-type zinc fingers lie at residues 392 to 414 (CSVC…SKFH) and 481 to 504 (CLAC…SVDH). Residues 525 to 569 (SVLNNRHIVKMLEKYLKGEDPFTSETVDPEMEGDDNLGGEDKKET) form an involved in condensin complex recruitment region. A disordered region spans residues 545-571 (PFTSETVDPEMEGDDNLGGEDKKETPE). Positions 551–562 (VDPEMEGDDNLG) are enriched in acidic residues. A Glycyl lysine isopeptide (Lys-Gly) (interchain with G-Cter in SUMO2) cross-link involves residue Lys567. Positions 572 to 589 (EVAADVLAEVITAAVRAV) are RII-binding. The interval 576–593 (DVLAEVITAAVRAVDGEG) is required for interaction with MYCBP. Positions 592-692 (EGAPAPESSG…AESKDAVPTE (101 aa)) are disordered. Residues 634–646 (AHEKGVPKARSEA) are compositionally biased toward basic and acidic residues. At Ser662 the chain carries Phosphoserine. Low complexity predominate over residues 663-675 (AQTRVAPAPAAAD). Residues 683-692 (AESKDAVPTE) show a composition bias toward basic and acidic residues. Ser685 carries the post-translational modification Phosphoserine.

It belongs to the AKAP95 family. Binds to the PKA RII-alpha regulatory subunit PRKAR2A (phosphorylated at 'Thr-54') during mitosis. Interacts (via C-terminus) with FIGN. Interacts with NCAPD2, CCND1, MCM2, RPS6KA1, PDE4A. Interacts with CCND3, CCNE1, DDX5, CASP3. Interacts with NFKB1; detetcted in the cytoplasm. Interacts with MYCBP; MYCBP is translocated to the nucleus and the interaction prevents the association of the PKA catalytic subunit leading to suppression of PKA activity. Interacts with DPY30; mediating AKAP8 association with at least the MLL4/WBP7 HMT complex. Interacts with HDAC3; increased during mitosis. Interacts with GJA1; in the nucleus and in the nuclear membrane; the nuclear association increases with progress of cell cycle G1, S and G2 phase and decreases in M phase. Post-translationally, phosphorylated on tyrosine residues probably by SRC subfamily protein kinases; multiple phosphorylation is leading to dissociation from nuclear structures implicated in chromatin structural changes. Highly expressed in heart, liver, skeletal muscle, kidney and pancreas. Expressed in mature dendritic cells.

Its subcellular location is the nucleus. It is found in the nucleus matrix. The protein resides in the nucleolus. The protein localises to the cytoplasm. In terms of biological role, anchoring protein that mediates the subcellular compartmentation of cAMP-dependent protein kinase (PKA type II). Acts as an anchor for a PKA-signaling complex onto mitotic chromosomes, which is required for maintenance of chromosomes in a condensed form throughout mitosis. Recruits condensin complex subunit NCAPD2 to chromosomes required for chromatin condensation; the function appears to be independent from PKA-anchoring. May help to deliver cyclin D/E to CDK4 to facilitate cell cycle progression. Required for cell cycle G2/M transition and histone deacetylation during mitosis. In mitotic cells recruits HDAC3 to the vicinity of chromatin leading to deacetylation and subsequent phosphorylation at 'Ser-10' of histone H3; in this function may act redundantly with AKAP8L. Involved in nuclear retention of RPS6KA1 upon ERK activation thus inducing cell proliferation. May be involved in regulation of DNA replication by acting as scaffold for MCM2. Enhances HMT activity of the KMT2 family MLL4/WBP7 complex and is involved in transcriptional regulation. In a teratocarcinoma cell line is involved in retinoic acid-mediated induction of developmental genes implicating H3 'Lys-4' methylation. May be involved in recruitment of active CASP3 to the nucleus in apoptotic cells. May act as a carrier protein of GJA1 for its transport to the nucleus. May play a repressive role in the regulation of rDNA transcription. Preferentially binds GC-rich DNA in vitro. In cells, associates with ribosomal RNA (rRNA) chromatin, preferentially with rRNA promoter and transcribed regions. Involved in modulation of Toll-like receptor signaling. Required for the cAMP-dependent suppression of TNF-alpha in early stages of LPS-induced macrophage activation; the function probably implicates targeting of PKA to NFKB1. The polypeptide is A-kinase anchor protein 8 (AKAP8) (Homo sapiens (Human)).